Here is a 388-residue protein sequence, read N- to C-terminus: Alanine racemase 1 (388 aa).

Residue Lys-40 is the Proton acceptor; specific for D-alanine of the active site. Lys-40 carries the post-translational modification N6-(pyridoxal phosphate)lysine. Arg-138 serves as a coordination point for substrate. The active-site Proton acceptor; specific for L-alanine is Tyr-268. A substrate-binding site is contributed by Met-316.

Belongs to the alanine racemase family. It depends on pyridoxal 5'-phosphate as a cofactor.

It carries out the reaction L-alanine = D-alanine. Its pathway is amino-acid biosynthesis; D-alanine biosynthesis; D-alanine from L-alanine: step 1/1. In terms of biological role, catalyzes the interconversion of L-alanine and D-alanine. May also act on other amino acids. This chain is Alanine racemase 1 (alr1), found in Caldanaerobacter subterraneus subsp. tengcongensis (strain DSM 15242 / JCM 11007 / NBRC 100824 / MB4) (Thermoanaerobacter tengcongensis).